A 95-amino-acid polypeptide reads, in one-letter code: Small ribosomal subunit protein bS6 (95 aa).

This sequence belongs to the bacterial ribosomal protein bS6 family.

Binds together with bS18 to 16S ribosomal RNA. The sequence is that of Small ribosomal subunit protein bS6 from Thermoanaerobacter pseudethanolicus (strain ATCC 33223 / 39E) (Clostridium thermohydrosulfuricum).